We begin with the raw amino-acid sequence, 461 residues long: Bifunctional protein GlmU (461 aa).

The pyrophosphorylase stretch occupies residues 1 to 236 (MNVLLQELFI…VFEIFGINNR (236 aa)). UDP-N-acetyl-alpha-D-glucosamine is bound by residues K27, Q80, 85-86 (GT), 109-111 (YGD), G146, E160, N175, and N234. Position 111 (D111) interacts with Mg(2+). A Mg(2+)-binding site is contributed by N234. The segment at 237-257 (FQLMKLEKIYQIEQAKKLLLN) is linker. Residues 258 to 461 (GVTLSDYNRF…SILRKENNSK (204 aa)) form an N-acetyltransferase region. K358 provides a ligand contact to UDP-N-acetyl-alpha-D-glucosamine. The active-site Proton acceptor is H370. UDP-N-acetyl-alpha-D-glucosamine-binding residues include Y373 and N384. 3 residues coordinate acetyl-CoA: A387, A430, and R447.

The protein in the N-terminal section; belongs to the N-acetylglucosamine-1-phosphate uridyltransferase family. It in the C-terminal section; belongs to the transferase hexapeptide repeat family. In terms of assembly, homotrimer. Mg(2+) is required as a cofactor.

It localises to the cytoplasm. It carries out the reaction alpha-D-glucosamine 1-phosphate + acetyl-CoA = N-acetyl-alpha-D-glucosamine 1-phosphate + CoA + H(+). The enzyme catalyses N-acetyl-alpha-D-glucosamine 1-phosphate + UTP + H(+) = UDP-N-acetyl-alpha-D-glucosamine + diphosphate. The protein operates within nucleotide-sugar biosynthesis; UDP-N-acetyl-alpha-D-glucosamine biosynthesis; N-acetyl-alpha-D-glucosamine 1-phosphate from alpha-D-glucosamine 6-phosphate (route II): step 2/2. It functions in the pathway nucleotide-sugar biosynthesis; UDP-N-acetyl-alpha-D-glucosamine biosynthesis; UDP-N-acetyl-alpha-D-glucosamine from N-acetyl-alpha-D-glucosamine 1-phosphate: step 1/1. It participates in bacterial outer membrane biogenesis; LPS lipid A biosynthesis. Its function is as follows. Catalyzes the last two sequential reactions in the de novo biosynthetic pathway for UDP-N-acetylglucosamine (UDP-GlcNAc). The C-terminal domain catalyzes the transfer of acetyl group from acetyl coenzyme A to glucosamine-1-phosphate (GlcN-1-P) to produce N-acetylglucosamine-1-phosphate (GlcNAc-1-P), which is converted into UDP-GlcNAc by the transfer of uridine 5-monophosphate (from uridine 5-triphosphate), a reaction catalyzed by the N-terminal domain. This is Bifunctional protein GlmU from Wigglesworthia glossinidia brevipalpis.